Reading from the N-terminus, the 229-residue chain is Transmembrane protein 217 (229 aa).

The helical transmembrane segment at 13-33 threads the bilayer; the sequence is MGTVLSGVFTIMAVDMYLIFE. Asn-39 carries N-linked (GlcNAc...) asparagine glycosylation. The next 3 membrane-spanning stretches (helical) occupy residues 67–87, 94–114, and 129–149; these read IVLF…YSVY, LVIY…IQIL, and WFGL…VINY. A glycan (N-linked (GlcNAc...) asparagine) is linked at Asn-156.

The protein localises to the membrane. The sequence is that of Transmembrane protein 217 (TMEM217) from Homo sapiens (Human).